Here is a 159-residue protein sequence, read N- to C-terminus: Cyclic pyranopterin monophosphate synthase (159 aa).

Residues 75 to 77 and 113 to 114 contribute to the substrate site; these read LCH and ME. The active site involves aspartate 128.

It belongs to the MoaC family. In terms of assembly, homohexamer; trimer of dimers.

The enzyme catalyses (8S)-3',8-cyclo-7,8-dihydroguanosine 5'-triphosphate = cyclic pyranopterin phosphate + diphosphate. Its pathway is cofactor biosynthesis; molybdopterin biosynthesis. Its function is as follows. Catalyzes the conversion of (8S)-3',8-cyclo-7,8-dihydroguanosine 5'-triphosphate to cyclic pyranopterin monophosphate (cPMP). This Aliivibrio salmonicida (strain LFI1238) (Vibrio salmonicida (strain LFI1238)) protein is Cyclic pyranopterin monophosphate synthase.